Reading from the N-terminus, the 152-residue chain is Deoxyuridine 5'-triphosphate nucleotidohydrolase (152 aa).

Substrate-binding positions include Arg71–Gly73, Asn84, Leu88–Asp90, and Met98.

This sequence belongs to the dUTPase family. Mg(2+) serves as cofactor.

It carries out the reaction dUTP + H2O = dUMP + diphosphate + H(+). Its pathway is pyrimidine metabolism; dUMP biosynthesis; dUMP from dCTP (dUTP route): step 2/2. This enzyme is involved in nucleotide metabolism: it produces dUMP, the immediate precursor of thymidine nucleotides and it decreases the intracellular concentration of dUTP so that uracil cannot be incorporated into DNA. This chain is Deoxyuridine 5'-triphosphate nucleotidohydrolase, found in Shewanella piezotolerans (strain WP3 / JCM 13877).